A 221-amino-acid polypeptide reads, in one-letter code: Protein LURP-one-related 17 (221 aa).

Residues M1–S20 form a disordered region.

The protein belongs to the LOR family.

Its function is as follows. Might be related to the phospholipid scramblase and tubby-like superfamily of membrane tethered transcription factors. The chain is Protein LURP-one-related 17 from Arabidopsis thaliana (Mouse-ear cress).